The chain runs to 362 residues: MHRPEPSYCREEPTPCQGVNSTWVPPADTVPETSPTPSSPPAPDSPTPSPQPGYGYSPCEEKPGDPRIRRPMNAFMVWAKDERKRLAQQNPDLHNAVLSKMLGQSWKNLSSAEKRPFVEEAERLRVQHLQDHPNYKYRPRRKKQAKKLKRVDPSPLLRNEGYRGQAMANLSHFRDLHPLGGSGDLESYGLPTPEMSPLDVVEPSEPAFFPPHMREEADPGPFRTYQHGVDFGQEKTLREISLPYSSSPSHMGGFLRTPTASAFYYNPHGGSPACTPLGQLSPPPEAPALEAMDHLGPAELWGDFDRNEFDQYLNMSRTQGPGYPFPMSKLGAPRTIPCEESSLISALSDASTAMYYTPCITG.

The span at 1–13 (MHRPEPSYCREEP) shows a compositional bias: basic and acidic residues. The disordered stretch occupies residues 1–68 (MHRPEPSYCR…CEEKPGDPRI (68 aa)). A compositionally biased stretch (pro residues) spans 37–51 (PSSPPAPDSPTPSPQ). Residues 59-68 (CEEKPGDPRI) are compositionally biased toward basic and acidic residues. The HMG box DNA-binding region spans 68–136 (IRRPMNAFMV…QHLQDHPNYK (69 aa)). Interaction with DNA regions lie at residues 70–83 (RPMN…KDER) and 94–106 (HNAV…GQSW). Positions 129–159 (LQDHPNYKYRPRRKKQAKKLKRVDPSPLLRN) are disordered. The span at 135 to 149 (YKYRPRRKKQAKKLK) shows a compositional bias: basic residues. The tract at residues 149–209 (KRVDPSPLLR…VVEPSEPAFF (61 aa)) is important for transcriptional activation. Residues 235–361 (KTLREISLPY…TAMYYTPCIT (127 aa)) enclose the Sox C-terminal domain. Residues 307-315 (NEFDQYLNM) carry the 9aaTAD motif.

The protein resides in the nucleus. Transcription factor. Binds to the consensus DNA sequence 5'-AACAAT-3'. Also binds 5'-CACAAT-3' and 5'-AATAAT-3' but with a lower affinity. Acts partially redundantly with sox7 during cardiogenesis, acting indirectly through nodal-signaling to induce mesodermal, organizer and endodermal tissues, which then interact to initiate cardiogenesis. Also acts as an antagonist of beta-catenin signaling. The chain is Transcription factor Sox-18 from Xenopus tropicalis (Western clawed frog).